The chain runs to 158 residues: NAD(P)H-quinone oxidoreductase subunit N (158 aa).

The protein belongs to the complex I NdhN subunit family. NDH-1 can be composed of about 15 different subunits; different subcomplexes with different compositions have been identified which probably have different functions.

It is found in the cellular thylakoid membrane. The catalysed reaction is a plastoquinone + NADH + (n+1) H(+)(in) = a plastoquinol + NAD(+) + n H(+)(out). It carries out the reaction a plastoquinone + NADPH + (n+1) H(+)(in) = a plastoquinol + NADP(+) + n H(+)(out). NDH-1 shuttles electrons from an unknown electron donor, via FMN and iron-sulfur (Fe-S) centers, to quinones in the respiratory and/or the photosynthetic chain. The immediate electron acceptor for the enzyme in this species is believed to be plastoquinone. Couples the redox reaction to proton translocation, and thus conserves the redox energy in a proton gradient. Cyanobacterial NDH-1 also plays a role in inorganic carbon-concentration. This chain is NAD(P)H-quinone oxidoreductase subunit N, found in Synechococcus elongatus (strain ATCC 33912 / PCC 7942 / FACHB-805) (Anacystis nidulans R2).